The following is a 341-amino-acid chain: MSDSTHKIAVIGAGSWGTALAALLARHGHPTVLWGRDAAMVDTIDRTHENARYLPGIALPDSLRATTDLQAAVADAAWILVVVPSHAFTETIRLIAPLRPACPGVAWATKGFEPGSGRFLHEVARDILGPSVPLAVVTGPSFAKEVTLGLPTAITVHGDDATFAQAVADAMHGPTFRAYTGDDMVGAELGGAMKNVLAVATGVADGMQLGLNARAGLITRGLNEMLRLAAAIGARPETLMGLAGLGDLVLTCTGDLSRNRRLGLALGRGQSLNDAIRQIGQVVESVQMADEVMRQAEHHGIELPISNAVRAVLHGEITPEAGLKELLARERKPEYPQTLFT.

4 residues coordinate NADPH: Ser15, Trp16, Arg36, and Lys110. The sn-glycerol 3-phosphate site is built by Lys110, Gly139, and Ser141. Ala143 contributes to the NADPH binding site. Residues Lys194, Asp247, Ser257, Arg258, and Asn259 each contribute to the sn-glycerol 3-phosphate site. The Proton acceptor role is filled by Lys194. Arg258 is an NADPH binding site. 2 residues coordinate NADPH: Val282 and Glu284.

It belongs to the NAD-dependent glycerol-3-phosphate dehydrogenase family.

Its subcellular location is the cytoplasm. The catalysed reaction is sn-glycerol 3-phosphate + NAD(+) = dihydroxyacetone phosphate + NADH + H(+). It carries out the reaction sn-glycerol 3-phosphate + NADP(+) = dihydroxyacetone phosphate + NADPH + H(+). It participates in membrane lipid metabolism; glycerophospholipid metabolism. In terms of biological role, catalyzes the reduction of the glycolytic intermediate dihydroxyacetone phosphate (DHAP) to sn-glycerol 3-phosphate (G3P), the key precursor for phospholipid synthesis. The polypeptide is Glycerol-3-phosphate dehydrogenase [NAD(P)+] (Xanthomonas oryzae pv. oryzae (strain MAFF 311018)).